Here is a 125-residue protein sequence, read N- to C-terminus: SNRPMPLNIKQFNNMIQCTVPARSWWDFADYGCYCGSGSGSPVDDLDRCCQVHDNCYNAGGGVTGCAPKSKTYTYECSQGTLTCSGENSACAATVCDCDRLAAICFAGAPYNDNNYNIDLKSRCQ.

Ser1 is a signal peptide. Positions 2-7 (NRPMPL) are excised as a propeptide. Disulfide bonds link Cys18–Cys77, Cys33–Cys124, Cys35–Cys50, Cys49–Cys105, Cys56–Cys98, Cys66–Cys91, and Cys84–Cys96. A Zn(2+)-binding site is contributed by Asp30. Residues Tyr34 and Gly36 each contribute to the Ca(2+) site. Residue His53 is part of the active site. Residue Asp54 participates in Ca(2+) binding. Residue Asp99 is part of the active site.

In terms of assembly, heterodimer formed between isoform 5 and isoform 6 in presence of zinc ion and monomer in absence of zinc ion. It depends on Ca(2+) as a cofactor. In terms of tissue distribution, expressed by the venom gland.

The protein localises to the secreted. The enzyme catalyses a 1,2-diacyl-sn-glycero-3-phosphocholine + H2O = a 1-acyl-sn-glycero-3-phosphocholine + a fatty acid + H(+). In terms of biological role, PLA2 catalyzes the calcium-dependent hydrolysis of the 2-acyl groups in 3-sn-phosphoglycerides. The sequence is that of Acidic phospholipase A2 6 from Naja sagittifera (Andaman cobra).